Reading from the N-terminus, the 147-residue chain is NADH-quinone oxidoreductase subunit A (147 aa).

A run of 3 helical transmembrane segments spans residues 13–33 (LFSY…LGAV), 70–90 (YLVA…FSWA), and 104–124 (VVVF…WGAL).

This sequence belongs to the complex I subunit 3 family. As to quaternary structure, NDH-1 is composed of 14 different subunits. Subunits NuoA, H, J, K, L, M, N constitute the membrane sector of the complex.

It is found in the cell inner membrane. The catalysed reaction is a quinone + NADH + 5 H(+)(in) = a quinol + NAD(+) + 4 H(+)(out). In terms of biological role, NDH-1 shuttles electrons from NADH, via FMN and iron-sulfur (Fe-S) centers, to quinones in the respiratory chain. The immediate electron acceptor for the enzyme in this species is believed to be ubiquinone. Couples the redox reaction to proton translocation (for every two electrons transferred, four hydrogen ions are translocated across the cytoplasmic membrane), and thus conserves the redox energy in a proton gradient. The protein is NADH-quinone oxidoreductase subunit A of Gluconacetobacter diazotrophicus (strain ATCC 49037 / DSM 5601 / CCUG 37298 / CIP 103539 / LMG 7603 / PAl5).